A 755-amino-acid polypeptide reads, in one-letter code: E3 ubiquitin-protein ligase TRIM56 (755 aa).

The segment at 21–60 adopts an RING-type zinc-finger fold; the sequence is CKICLEQLRAPKTLPCLHTYCQDCLAQLADGGRVRCPECR. 2 B box-type zinc fingers span residues 98-149 and 164-205; these read KPAC…VVDL and RQAA…CLPL. Residues C169, H172, C192, and H197 each coordinate Zn(2+). Residues 216–314 adopt a coiled-coil conformation; that stretch reads LEGLLAGVDN…AAAFARRVLS (99 aa). A disordered region spans residues 371-484; the sequence is EEQQPQKDGG…SPALGPNLDG (114 aa). Over residues 392–404 the composition is skewed to basic and acidic residues; it reads SQSRREDEPKTER. T418 and T442 each carry phosphothreonine. Basic and acidic residues predominate over residues 419-447; that stretch reads PKEEKAQTTREEGAQTLEEDRAQTPHEDG. Positions 453–469 are enriched in basic residues; the sequence is RGGRPNKKKKFKGRLKS. A Phosphoserine modification is found at S475.

The protein belongs to the TRIM/RBCC family. As to quaternary structure, homooligomer. Interacts with STING1. Interacts with TICAM1. In terms of processing, (Microbial infection) Preferentially ubiquitinated with 'Lys-48' and 'Lys-11'-linked ubiquitin chains by Salmonella effector SopA leading to proteasomal targeting and degradation. Post-translationally, autoubiquitinated. Widely expressed (at protein level).

The protein localises to the cytoplasm. It carries out the reaction S-ubiquitinyl-[E2 ubiquitin-conjugating enzyme]-L-cysteine + [acceptor protein]-L-lysine = [E2 ubiquitin-conjugating enzyme]-L-cysteine + N(6)-ubiquitinyl-[acceptor protein]-L-lysine.. It participates in protein modification; protein ubiquitination. In terms of biological role, E3 ubiquitin-protein ligase that plays a key role in innate antiviral immunity by mediating ubiquitination of CGAS and STING1. In response to pathogen- and host-derived double-stranded DNA (dsDNA), targets STING1 to 'Lys-63'-linked ubiquitination, thereby promoting its homodimerization, a step required for the production of type I interferon IFN-beta. Also mediate monoubiquitination of CGAS, thereby promoting CGAS oligomerization and subsequent activation. Promotes also TNFalpha-induced NF-kappa-B signaling by mediating 'Lys-63'-linked ubiquitination TAK1, leading to enhanced interaction between TAK1 and CHUK/IKKalpha. Independently of its E3 ubiquitin ligase activity, positive regulator of TLR3 signaling. Potentiates extracellular double stranded RNA (dsRNA)-induced expression of IFNB1 and interferon-stimulated genes ISG15, IFIT1/ISG56, CXCL10, OASL and CCL5/RANTES. Promotes establishment of an antiviral state by TLR3 ligand and TLR3-mediated chemokine induction following infection by hepatitis C virus. Acts as a restriction factor of Zika virus through direct interaction with the viral RNA via its C-terminal region. The polypeptide is E3 ubiquitin-protein ligase TRIM56 (Homo sapiens (Human)).